A 539-amino-acid chain; its full sequence is E3 ubiquitin-protein ligase arc-1 (539 aa).

Residues 6–53 (CNVCNEEYSARDPLKCPRVLTGCGHTICHNCAISIAGRNSSIFCPFDR) form an RING-type zinc finger. A B box-type zinc finger spans residues 103-149 (LLNLECDEDSEHVAVIYCTVCDSNLCERCSESTHSTNVLSKHRRIPL). Residues 369–539 (ESRVVLLGLD…LSRLNGTCPV (171 aa)) are ARF-like. GTP-binding positions include 376–383 (GLDGAGKT), 422–426 (DVGGL), and 481–484 (NRKD).

In the C-terminal section; belongs to the small GTPase superfamily. Arf family.

The catalysed reaction is S-ubiquitinyl-[E2 ubiquitin-conjugating enzyme]-L-cysteine + [acceptor protein]-L-lysine = [E2 ubiquitin-conjugating enzyme]-L-cysteine + N(6)-ubiquitinyl-[acceptor protein]-L-lysine.. It functions in the pathway protein modification; protein ubiquitination. Acts as an E3 ubiquitin-protein ligase. The polypeptide is E3 ubiquitin-protein ligase arc-1 (arc-1) (Caenorhabditis elegans).